The chain runs to 293 residues: Energy-coupling factor transporter ATP-binding protein EcfA2 (293 aa).

Positions 3–246 (ITFQKVEHRY…ADELEKIGVD (244 aa)) constitute an ABC transporter domain. 40 to 47 (GHTGSGKS) contributes to the ATP binding site.

This sequence belongs to the ABC transporter superfamily. Energy-coupling factor EcfA family. As to quaternary structure, forms a stable energy-coupling factor (ECF) transporter complex composed of 2 membrane-embedded substrate-binding proteins (S component), 2 ATP-binding proteins (A component) and 2 transmembrane proteins (T component).

Its subcellular location is the cell membrane. Its function is as follows. ATP-binding (A) component of a common energy-coupling factor (ECF) ABC-transporter complex. Unlike classic ABC transporters this ECF transporter provides the energy necessary to transport a number of different substrates. This is Energy-coupling factor transporter ATP-binding protein EcfA2 from Bacillus anthracis.